The following is a 401-amino-acid chain: Diphosphomevalonate decarboxylase (401 aa).

Ala2 is subject to N-acetylalanine. (R)-5-diphosphomevalonate contacts are provided by residues 24-27 (YWGK), Arg79, 157-162 (SGSACR), and Thr213. The interval 382 to 401 (VLDDPHHHLLGPDGLPQRDL) is disordered.

Belongs to the diphosphomevalonate decarboxylase family. As to quaternary structure, homodimer.

The protein localises to the cytoplasm. It catalyses the reaction (R)-5-diphosphomevalonate + ATP = isopentenyl diphosphate + ADP + phosphate + CO2. It functions in the pathway steroid biosynthesis; cholesterol biosynthesis. Catalyzes the ATP dependent decarboxylation of (R)-5-diphosphomevalonate to form isopentenyl diphosphate (IPP). Functions in the mevalonate (MVA) pathway leading to isopentenyl diphosphate (IPP), a key precursor for the biosynthesis of isoprenoids and sterol synthesis. In Rattus norvegicus (Rat), this protein is Diphosphomevalonate decarboxylase (Mvd).